Here is a 182-residue protein sequence, read N- to C-terminus: Chromophore lyase CpcS/CpeS (182 aa).

Belongs to the CpcS/CpeS biliprotein lyase family.

In terms of biological role, covalently attaches a chromophore to Cys residue(s) of phycobiliproteins. This Thermosynechococcus vestitus (strain NIES-2133 / IAM M-273 / BP-1) protein is Chromophore lyase CpcS/CpeS.